A 1278-amino-acid chain; its full sequence is MTRRCMPARPGFPSSPAPGSSPPRCHLRPGSTAPAAAGKRTESPGDRKQSIIDFFKPAAKQDKHMLDSPQKSNIKYRGNGLSITGTEQFERKLSSPKKLKPKRMSSEESPILEAFMKGGKEHHKDRGVHESRRPCMSLSKYLPKGAGIYAPSSYRLPKEIKAQKKKHQSPERRKSLFIHESNREKNDRDRGKNSEDSRKQATATEGDIFKHSSRSISSRSSLSRHHPGESTLGARFQLSLASYWREREQKKLRKEQMEQRINSENSFSEASNLSLKSSGVGKNCKPRHEHSKHTEAVPGKSNLSTLENGHLSRKRSSSDSWELSGSKQNKFSDKRTEELCGLRPEKHKRTYHTKSKRVLSREAPRHIPSERKVYQTHCTEDSWWCSALGRHSQGAGKTVSRGMSIASTLRLYLGRVISQLWKMDISQEKDHLQTRGNFQALNRINSPTKEQRNSVDSDLKSTKEPIIPKARESFLEKRPDTSHQREKFIRHIALKTPGGVLRLEDIAKEPEDETDRSSADSAPSNAGHHSSRNSDQVHSASTKETKIQKPHLPLPQEKSTIKRASNLQKNKPAGSVTSKETKLPLLSHVPSAVSSRVPLNAKNCTLPVPKKDKERSSSKERSGHSTESSKHKEHRAKTIKAVSNESSGKNSGGSLHSEYAPPTASPPAALEVVPSVPSPAAPSDKESSGNSNAGSNALKRKFRGDFDSDEESLGYTLESDEEEETLKSLEEIMALNFSRTPTTSGKPPAVSKGLRSQSSDMKEYAQSGTYTNTLERLVKEMEDTQRLDELQKKLQEDIRQGRGIKSPLRTGDQDSTDDGDGLLEEHREFLKKFSVTVDAIPDHHPGEEIFNFLNSGKIFNQYTLDLRDSGFIGESAVEKLILKSGKTDQIFLTTQGFLTTAYHYVQCPVPVLKWLFRMMSVHTDCIVSVQILSTLMEITIRNDTFSDSPVWPWIPSLSDIAAVFFNMGVGFGSLFPLETLQPDFNEENLISETQKTLGGKESEDSPYSPVFSALPETNILNVVKFLGLCTSIHPEGYQDGELMLLILMLFKMSLEKELKQIPLVDFQSLLINLMKNIRDWNTKVHELCLGINELSSHPHNLLWLVQLVPNWTSRGRQLRQCLSLVMMSKLLDEKHEDIPNANNLQISVLHRYLVQMKPSDLLKKMVLKKRAEQPNETIDDSLHLELEKQAYYLTYILLHLVGEVSCSHSLSSGQRKHFVLLCGALEKHVKCDIREDARLFYRTKVKDLVARIHGKWQEIIQNCRPTQGQLHDFWVPDS.

Disordered regions lie at residues 1–235 (MTRR…LGAR), 248–337 (EQKK…KRTE), 443–491 (RINS…FIRH), and 509–582 (EPED…KETK). Residues 39–50 (KRTESPGDRKQS) are compositionally biased toward basic and acidic residues. Residues 94-103 (SSPKKLKPKR) are compositionally biased toward basic residues. 4 stretches are compositionally biased toward basic and acidic residues: residues 118 to 133 (GGKE…ESRR), 156 to 174 (LPKE…ERRK), 180 to 199 (ESNR…DSRK), and 248 to 258 (EQKKLRKEQME). Composition is skewed to polar residues over residues 259-277 (QRIN…SLKS) and 318-329 (SDSWELSGSKQN). Composition is skewed to basic and acidic residues over residues 449-463 (KEQR…KSTK) and 469-489 (KARE…EKFI). Positions 519-540 (ADSAPSNAGHHSSRNSDQVHSA) are enriched in polar residues. Ser591 bears the Phosphoserine mark. Disordered stretches follow at residues 598–724 (PLNA…EEEE), 739–764 (RTPT…MKEY), and 798–820 (IRQG…DDGD). Residues 609 to 630 (PKKDKERSSSKERSGHSTESSK) are compositionally biased toward basic and acidic residues. Low complexity-rich tracts occupy residues 643–654 (SNESSGKNSGGS), 666–675 (PPAALEVVPS), and 688–697 (SGNSNAGSNA). Positions 707–724 (DSDEESLGYTLESDEEEE) are enriched in acidic residues. A phosphoserine mark is found at Ser708, Ser712, and Ser719. An interaction with SIMC1 region spans residues 740 to 1278 (TPTTSGKPPA…QLHDFWVPDS (539 aa)). The tract at residues 769–1271 (TYTNTLERLV…NCRPTQGQLH (503 aa)) is NSE6-like domain. A required for interaction with SLF1 and RAD18 region spans residues 807–1278 (PLRTGDQDST…QLHDFWVPDS (472 aa)).

It belongs to the FAM178 family. In terms of assembly, forms a heterodimer with SIMC1. Interacts with SLF1 (via N-terminus); this interaction links RAD18 to the SMC5-SMC6 complex. Interacts with RAD18; this interaction is increased in a SLF1-dependent manner. Interacts with SMC5 and SMC6.

The protein resides in the nucleus. It is found in the PML body. Plays a role in the DNA damage response (DDR) pathway by regulating postreplication repair of UV-damaged DNA and genomic stability maintenance. The SLF1-SLF2 complex acts to link RAD18 with the SMC5-SMC6 complex at replication-coupled interstrand cross-links (ICL) and DNA double-strand breaks (DSBs) sites on chromatin during DNA repair in response to stalled replication forks. Promotes the recruitment of the SMC5-SMC6 complex to DNA lesions. May play a role in SMC5-SMC6 complex recruitment for viral restriction. Forms a complex with SIMC1 and this complex is required to recruit SMC5-SMC6 complex to PML nuclear bodies and sites of viral replication. In Mus musculus (Mouse), this protein is SMC5-SMC6 complex localization factor protein 2.